The chain runs to 714 residues: Polyribonucleotide nucleotidyltransferase (714 aa).

Mg(2+) contacts are provided by aspartate 486 and aspartate 492. The 60-residue stretch at 553-612 folds into the KH domain; the sequence is PRIITMKINPEKIRDVIGKGGAVIRALTEETGTTIDIEEDGTIKIGCTSAEAGEEAKKRI. One can recognise an S1 motif domain in the interval 622 to 690; it reads GQVYDGTVLK…DKGRVRLSAK (69 aa).

Belongs to the polyribonucleotide nucleotidyltransferase family. Requires Mg(2+) as cofactor.

It localises to the cytoplasm. The enzyme catalyses RNA(n+1) + phosphate = RNA(n) + a ribonucleoside 5'-diphosphate. In terms of biological role, involved in mRNA degradation. Catalyzes the phosphorolysis of single-stranded polyribonucleotides processively in the 3'- to 5'-direction. The chain is Polyribonucleotide nucleotidyltransferase from Methylobacillus flagellatus (strain ATCC 51484 / DSM 6875 / VKM B-1610 / KT).